Here is a 149-residue protein sequence, read N- to C-terminus: Large ribosomal subunit protein bL9 (149 aa).

The protein belongs to the bacterial ribosomal protein bL9 family.

Binds to the 23S rRNA. The chain is Large ribosomal subunit protein bL9 from Syntrophus aciditrophicus (strain SB).